Reading from the N-terminus, the 515-residue chain is Bifunctional purine biosynthesis protein PurH (515 aa).

In terms of domain architecture, MGS-like spans 1 to 145 (MTKRALISVS…KNHASVTVVV (145 aa)).

It belongs to the PurH family.

It carries out the reaction (6R)-10-formyltetrahydrofolate + 5-amino-1-(5-phospho-beta-D-ribosyl)imidazole-4-carboxamide = 5-formamido-1-(5-phospho-D-ribosyl)imidazole-4-carboxamide + (6S)-5,6,7,8-tetrahydrofolate. The catalysed reaction is IMP + H2O = 5-formamido-1-(5-phospho-D-ribosyl)imidazole-4-carboxamide. It functions in the pathway purine metabolism; IMP biosynthesis via de novo pathway; 5-formamido-1-(5-phospho-D-ribosyl)imidazole-4-carboxamide from 5-amino-1-(5-phospho-D-ribosyl)imidazole-4-carboxamide (10-formyl THF route): step 1/1. The protein operates within purine metabolism; IMP biosynthesis via de novo pathway; IMP from 5-formamido-1-(5-phospho-D-ribosyl)imidazole-4-carboxamide: step 1/1. The protein is Bifunctional purine biosynthesis protein PurH of Streptococcus suis (strain 98HAH33).